The primary structure comprises 199 residues: Recombination protein RecR (199 aa).

The segment at 57 to 72 (CQACRTFTEETLCPIC) adopts a C4-type zinc-finger fold. Residues 81–176 (EVICVVETPA…SVSRIAHGVP (96 aa)) form the Toprim domain.

It belongs to the RecR family.

Functionally, may play a role in DNA repair. It seems to be involved in an RecBC-independent recombinational process of DNA repair. It may act with RecF and RecO. This chain is Recombination protein RecR, found in Shewanella woodyi (strain ATCC 51908 / MS32).